We begin with the raw amino-acid sequence, 320 residues long: L-lactate dehydrogenase A (320 aa).

Substrate contacts are provided by Arg-88, Asn-120, and Arg-151. Residue Asn-120 participates in NAD(+) binding. His-175 acts as the Proton acceptor in catalysis.

It belongs to the LDH/MDH superfamily. LDH family. As to quaternary structure, homotetramer.

Its subcellular location is the cytoplasm. It carries out the reaction (S)-lactate + NAD(+) = pyruvate + NADH + H(+). The protein operates within fermentation; pyruvate fermentation to lactate; (S)-lactate from pyruvate: step 1/1. Converts pyruvate to lactate. In Rhizopus oryzae (Mucormycosis agent), this protein is L-lactate dehydrogenase A (LDHA).